Consider the following 69-residue polypeptide: Guanine nucleotide-binding protein G(I)/G(S)/G(O) subunit gamma-T2 (69 aa).

At cysteine 66 the chain carries Cysteine methyl ester. Cysteine 66 carries the S-farnesyl cysteine lipid modification. Residues 67-69 (IIS) constitute a propeptide, removed in mature form.

The protein belongs to the G protein gamma family. As to quaternary structure, g proteins are composed of 3 units, alpha, beta and gamma.

The protein resides in the cell membrane. Its function is as follows. Guanine nucleotide-binding proteins (G proteins) are involved as a modulator or transducer in various transmembrane signaling systems. The beta and gamma chains are required for the GTPase activity, for replacement of GDP by GTP, and for G protein-effector interaction. This is Guanine nucleotide-binding protein G(I)/G(S)/G(O) subunit gamma-T2 (GNGT2) from Bos taurus (Bovine).